The following is a 1033-amino-acid chain: uncharacterized protein (1033 aa).

This is an uncharacterized protein from Mycoplasma pneumoniae (strain ATCC 29342 / M129 / Subtype 1) (Mycoplasmoides pneumoniae).